The chain runs to 63 residues: Prokaryotic ubiquitin-like protein Pup (63 aa).

Positions 1–11 (MPQKFEQMQSA) are enriched in polar residues. The disordered stretch occupies residues 1–28 (MPQKFEQMQSAEQKHDEDETIAQAGTQI). The ARC ATPase binding stretch occupies residues 19–57 (ETIAQAGTQIDDTVDALDAVLDDIESVLESNAEEYVGSF). E63 participates in a covalent cross-link: Isoglutamyl lysine isopeptide (Glu-Lys) (interchain with K-? in acceptor proteins).

This sequence belongs to the prokaryotic ubiquitin-like protein family. In terms of assembly, strongly interacts with the proteasome-associated ATPase ARC through a hydrophobic interface; the interacting region of Pup lies in its C-terminal half. There is one Pup binding site per ARC hexamer ring.

It participates in protein degradation; proteasomal Pup-dependent pathway. Functionally, protein modifier that is covalently attached to lysine residues of substrate proteins, thereby targeting them for proteasomal degradation. The tagging system is termed pupylation. The chain is Prokaryotic ubiquitin-like protein Pup (pup) from Bifidobacterium adolescentis (strain ATCC 15703 / DSM 20083 / NCTC 11814 / E194a).